The sequence spans 411 residues: Lysosome-associated membrane glycoprotein 2 (411 aa).

An N-terminal signal peptide occupies residues 1–26 (MRLLSPVTGSKLVLLFLFLGAVRSDA). The interval 27–188 (LKLNLTDSKG…SKHEQVCKED (162 aa)) is first lumenal domain. Residues 27–376 (LKLNLTDSKG…QDCSADEDNF (350 aa)) are Lumenal-facing. Cys38 and Cys75 are disulfide-bonded. Asn46, Asn57, Asn71, Asn97, Asn109, Asn117, Asn175, Asn223, Asn230, Asn243, Asn261, Asn276, Asn308, Asn318, and Asn357 each carry an N-linked (GlcNAc...) asparagine glycan. Cys149 and Cys185 are oxidised to a cystine. The tract at residues 189-229 (KTATTVAPIIHTTVPSPTTTLTPTSIPVPTPTVGNYTISNG) is hinge. Positions 230 to 376 (NATCLLATMG…QDCSADEDNF (147 aa)) are second lumenal domain. A disulfide bridge connects residues Cys233 and Cys266. Residues Cys332 and Cys369 are joined by a disulfide bond. The chain crosses the membrane as a helical span at residues 377 to 400 (LVPIAVGAALGGVLILVLLAYFIG). Over 401 to 411 (LKRHHTGYEQF) the chain is Cytoplasmic. An important for binding and subsequent lysosomal degradation of target proteins region spans residues 402-405 (KRHH).

The protein belongs to the LAMP family. Monomer. Forms large homooligomers. Interacts (via its cytoplasmic region) with HSPA8; HSPA8 mediates recruitment of proteins with a KFERQ motif to the surface of the lysosome for chaperone-mediated autophagy. Interacts with HSP90 in the lysosome lumen; this enhances LAMP2 stability. Interacts with MLLT11. Interacts with ABCB9. Interacts with FURIN. Interacts with CT55; this interaction may be important for LAMP2 protein stability. Interacts with TMEM175; inhibiting the proton channel activity of TMEM175. Forms a ternary complex with RAB7A and RUFY4 (via RUN domain); the interaction with RAB7A is mediated by RUFY4 (via RUN and coiled coil domains). In terms of processing, extensively N-glycosylated. Contains a minor proportion of O-linked glycans. Contains sialylated glycans. As to expression, detected in liver, kidney, spleen and macrophages (at protein level).

It localises to the lysosome membrane. It is found in the endosome membrane. Its subcellular location is the cell membrane. The protein localises to the cytoplasmic vesicle. The protein resides in the autophagosome membrane. Functionally, lysosomal membrane glycoprotein which plays an important role in lysosome biogenesis, lysosomal pH regulation and autophagy. Acts as an important regulator of lysosomal lumen pH regulation by acting as a direct inhibitor of the proton channel TMEM175, facilitating lysosomal acidification for optimal hydrolase activity. Plays an important role in chaperone-mediated autophagy, a process that mediates lysosomal degradation of proteins in response to various stresses and as part of the normal turnover of proteins with a long biological half-live. Functions by binding target proteins, such as GAPDH, NLRP3 and MLLT11, and targeting them for lysosomal degradation. In the chaperone-mediated autophagy, acts downstream of chaperones, such as HSPA8/HSC70, which recognize and bind substrate proteins and mediate their recruitment to lysosomes, where target proteins bind LAMP2. Plays a role in lysosomal protein degradation in response to starvation. Required for the fusion of autophagosomes with lysosomes during autophagy. Cells that lack LAMP2 express normal levels of VAMP8, but fail to accumulate STX17 on autophagosomes, which is the most likely explanation for the lack of fusion between autophagosomes and lysosomes. Required for normal degradation of the contents of autophagosomes. Required for efficient MHC class II-mediated presentation of exogenous antigens via its function in lysosomal protein degradation; antigenic peptides generated by proteases in the endosomal/lysosomal compartment are captured by nascent MHC II subunits. Is not required for efficient MHC class II-mediated presentation of endogenous antigens. This chain is Lysosome-associated membrane glycoprotein 2 (Lamp2), found in Rattus norvegicus (Rat).